The primary structure comprises 538 residues: D-alanyl-D-alanine carboxypeptidase (538 aa).

The disordered stretch occupies residues 1-21 (MKQSSPEPLRPRRTGGRGGAR). The N-terminal stretch at 1–49 (MKQSSPEPLRPRRTGGRGGARRAAALVTIPLLPMTLLGASPALADASGA) is a signal peptide. The active-site Acyl-ester intermediate is S98. K101 serves as the catalytic Proton acceptor. The interval 146-319 (TLSAEDLDAM…KGDVGLGGVP (174 aa)) is absent in class-A beta-lactamases. S347 is a catalytic residue. Residue K459 coordinates substrate. Residues 516 to 538 (GARMMRGPVQGSGELECSWVQAC) constitute a propeptide, removed in mature form.

It belongs to the peptidase S13 family.

It is found in the secreted. The catalysed reaction is Preferential cleavage: (Ac)2-L-Lys-D-Ala-|-D-Ala. Also transpeptidation of peptidyl-alanyl moieties that are N-acyl substituents of D-alanine.. It participates in cell wall biogenesis; peptidoglycan biosynthesis. Its activity is regulated as follows. Inhibited by benzylpenicillin, cephaloridine, ampicillin and cetiofur. Functionally, removes C-terminal D-alanyl residues from sugar-peptide cell wall precursors. In Actinomadura sp. (strain R39), this protein is D-alanyl-D-alanine carboxypeptidase (dac).